The following is a 220-amino-acid chain: Guanylate kinase (220 aa).

Residues 15–194 enclose the Guanylate kinase-like domain; sequence GLMLVISSPS…AFEGIEAIVK (180 aa). 22 to 29 is a binding site for ATP; the sequence is SPSGAGKS.

Belongs to the guanylate kinase family.

It localises to the cytoplasm. It carries out the reaction GMP + ATP = GDP + ADP. Its function is as follows. Essential for recycling GMP and indirectly, cGMP. This chain is Guanylate kinase, found in Agrobacterium fabrum (strain C58 / ATCC 33970) (Agrobacterium tumefaciens (strain C58)).